A 121-amino-acid chain; its full sequence is Small ribosomal subunit protein uS13 (121 aa).

The tract at residues 94–121 is disordered; the sequence is GLPVRGQNTKNNARTRKGPRRTVANKKK. The segment covering 106-121 has biased composition (basic residues); it reads ARTRKGPRRTVANKKK.

This sequence belongs to the universal ribosomal protein uS13 family. As to quaternary structure, part of the 30S ribosomal subunit. Forms a loose heterodimer with protein S19. Forms two bridges to the 50S subunit in the 70S ribosome.

Its function is as follows. Located at the top of the head of the 30S subunit, it contacts several helices of the 16S rRNA. In the 70S ribosome it contacts the 23S rRNA (bridge B1a) and protein L5 of the 50S subunit (bridge B1b), connecting the 2 subunits; these bridges are implicated in subunit movement. Contacts the tRNAs in the A and P-sites. The protein is Small ribosomal subunit protein uS13 of Anoxybacillus flavithermus (strain DSM 21510 / WK1).